Reading from the N-terminus, the 865-residue chain is Fatty acyl-CoA synthetase and RNA processing-associated kinase 1 (865 aa).

Residues 41-313 (YILGSTLGEG…LKQIKKHEWL (273 aa)) enclose the Protein kinase domain. Residues 47-55 (LGEGEFGKV) and lysine 80 each bind ATP. The active-site Proton acceptor is aspartate 175. A disordered region spans residues 341–398 (KPRRRYGSRPQSSCSTSSLGSRSDKRDSLVIDSTLITFPAPPQESQNHIITRPASIAS). Positions 352–361 (SSCSTSSLGS) are enriched in low complexity. At serine 441 the chain carries Phosphoserine. 3 disordered regions span residues 480–554 (ISGS…YTTP), 673–733 (TEES…LNEA), and 754–782 (SLYS…YQTN). Polar residues predominate over residues 494 to 538 (STTMQTSKIQPNNMASSQNHQYNKNKTQNSLQSAKNFYRTSSSSH). Basic and acidic residues-rich tracts occupy residues 690–708 (EGQE…EKGS) and 724–733 (NHLERSLNEA).

This sequence belongs to the protein kinase superfamily. Ser/Thr protein kinase family. As to quaternary structure, interacts with FAA3, POL5 and TPA1.

It localises to the cytoplasm. It catalyses the reaction L-seryl-[protein] + ATP = O-phospho-L-seryl-[protein] + ADP + H(+). The enzyme catalyses L-threonyl-[protein] + ATP = O-phospho-L-threonyl-[protein] + ADP + H(+). Its function is as follows. Putative serine/threonine-protein kinase that may be involved in rRNA transcription and ribosome biogenesis. The polypeptide is Fatty acyl-CoA synthetase and RNA processing-associated kinase 1 (FRK1) (Saccharomyces cerevisiae (strain ATCC 204508 / S288c) (Baker's yeast)).